Reading from the N-terminus, the 147-residue chain is Large ribosomal subunit protein uL15 (147 aa).

The segment at 21–49 is disordered; that stretch reads RVGRGEGSKGKTAGRGTKGTKARAPVRPG.

It belongs to the universal ribosomal protein uL15 family. Part of the 50S ribosomal subunit.

In terms of biological role, binds to the 23S rRNA. The sequence is that of Large ribosomal subunit protein uL15 from Tropheryma whipplei (strain TW08/27) (Whipple's bacillus).